The sequence spans 425 residues: Protein CLP1 homolog (425 aa).

ATP-binding positions include glutamate 18, lysine 59, and aspartate 121–threonine 126.

The protein belongs to the Clp1 family. Clp1 subfamily.

The protein localises to the nucleus. In terms of biological role, required for endonucleolytic cleavage during polyadenylation-dependent pre-mRNA 3'-end formation. In Drosophila grimshawi (Hawaiian fruit fly), this protein is Protein CLP1 homolog (cbc).